A 257-amino-acid polypeptide reads, in one-letter code: Capsid protein (257 aa).

Residues 3-20 (KRTGDILMSSPLSKFRRK) carry the Bipartite nuclear localization signal motif. Residues 40 to 54 (KRRSWTYRPMYRKPR) carry the Nuclear localization signal motif. A zinc finger lies at 68–85 (CEGPCKVQSYEQRDDVKH). The Nuclear export signal motif lies at 101–122 (ITHRVGKRFCIKSIYILGKIWM). Positions 201 to 248 (KRFFKVNTHVVYNHQEQAKYENHTENALLLYMACTHASNPVYATLKIR) match the Bipartite nuclear localization signal motif.

The protein belongs to the geminiviridae capsid protein family. As to quaternary structure, homomultimer. Binds to single-stranded and double-stranded viral DNA. Interacts (via nuclear localization signals) with host importin alpha-1a.

It localises to the virion. The protein localises to the host nucleus. Its function is as follows. Encapsidates the viral genome into characteristic twinned ('geminate') particles. Binds the genomic viral ssDNA and shuttles it into and out of the cell nucleus. Plays a role in protection of the genome from degradation, virus acquisition and transmission by insect vectors, infectivity, and systemic movement. The CP of monopartite geminiviruses is absolutely essential for virus movement. This Solanum lycopersicum (Tomato) protein is Capsid protein.